Consider the following 69-residue polypeptide: uncharacterized protein (69 aa).

This is an uncharacterized protein from Vaccinia virus (strain Copenhagen) (VACV).